Reading from the N-terminus, the 356-residue chain is MLKVPLSDVLSQKMLFLKSFRYFHCTKYFSRDNASSTTDIFRNAMKRKRELANLKEQSHGNVARNAAFPKEYIKRPKQVPRNATNRKKILITWSTGTDRAKEAANSVVSEIFKKNHKGNIKVVDPTTHRIEPSNIRYFAKGIDLDKVGLSIVNVEQIDNENQIPLVKIVESRVALKKYSDFLAKKKEKELMELGVLNKSYKNLVTDKKEDNLKHIKISWQIESDDLKRQKAHEIVSLLKKGNKVTLYLDDKNNINSNNWLENFEELDRSQKGEPPRLPESVFQKRAAVLETLKEIVSEYANDPVLLGNMNSKMIMKLIPKDVKPQNNDKRALKELRKKERQEKLQKRIQRKKMNEM.

Residues 1-32 (MLKVPLSDVLSQKMLFLKSFRYFHCTKYFSRD) constitute a mitochondrion transit peptide.

Belongs to the AIM23 family.

It localises to the mitochondrion. The chain is Altered inheritance of mitochondria protein 23, mitochondrial (AIM23) from Saccharomyces cerevisiae (strain YJM789) (Baker's yeast).